The primary structure comprises 389 residues: Putative F-box protein At1g47790 (389 aa).

The F-box domain maps to 19-65 (SKPTSSFPLDLASEILLRLPVKSVVRFRCVSKLWSSIITDPYFIKTY).

This chain is Putative F-box protein At1g47790, found in Arabidopsis thaliana (Mouse-ear cress).